The chain runs to 149 residues: Protein SprT-like (149 aa).

Residues 5 to 143 (DYVKQVSLED…CGLCRGKLLL (139 aa)) enclose the SprT-like domain. Residue His64 coordinates Zn(2+). Residue Glu65 is part of the active site. His68 lines the Zn(2+) pocket.

Belongs to the SprT family. The cofactor is Zn(2+).

The protein resides in the cytoplasm. This chain is Protein SprT-like, found in Streptococcus pneumoniae (strain Hungary19A-6).